Here is a 91-residue protein sequence, read N- to C-terminus: Virion membrane protein A14 homolog (91 aa).

Topologically, residues 1–12 are intravirion; sequence MDPLGFFRNRPS. A helical transmembrane segment spans residues 13-33; the sequence is YVVVFGIILLIVACICAYIEL. Residues 34–46 are Virion surface-facing; it reads SKSGKPADSALRS. Residues 47-67 traverse the membrane as a helical segment; it reads ISIISFILAILLLLGIILFSG. Residues 68–91 are Intravirion-facing; the sequence is YNRYCTGNVVDESRYATSPGTEIQ.

This sequence belongs to the chordopoxvirinae A14 family. In terms of assembly, homodimer; disulfide-linked. Interacts with A17. Phosphorylated by viral F10 kinase, phosphorylation state is regulated by H1 phosphatase.

The protein resides in the virion membrane. Functionally, envelope protein which is a major component of the mature virion (MV) membrane. Essential for membrane biogenesis. Is required, together with A17, to form bona fide crescents, which can progress to form the immature virion (IV) membrane. A14 and A17 form a lattice that is stabilized by disulfide bonds and serves as an anchor within the viral membrane to which several other proteins important in virion structure and morphogenesis attach. This Fowlpox virus (strain NVSL) (FPV) protein is Virion membrane protein A14 homolog.